We begin with the raw amino-acid sequence, 493 residues long: ATP synthase subunit beta, chloroplastic (493 aa).

170–177 is a binding site for ATP; that stretch reads GGAGVGKT.

The protein belongs to the ATPase alpha/beta chains family. As to quaternary structure, F-type ATPases have 2 components, CF(1) - the catalytic core - and CF(0) - the membrane proton channel. CF(1) has five subunits: alpha(3), beta(3), gamma(1), delta(1), epsilon(1). CF(0) has four main subunits: a(1), b(1), b'(1) and c(9-12).

It is found in the plastid. Its subcellular location is the chloroplast thylakoid membrane. It carries out the reaction ATP + H2O + 4 H(+)(in) = ADP + phosphate + 5 H(+)(out). Its function is as follows. Produces ATP from ADP in the presence of a proton gradient across the membrane. The catalytic sites are hosted primarily by the beta subunits. This chain is ATP synthase subunit beta, chloroplastic, found in Staurastrum punctulatum (Green alga).